The following is a 681-amino-acid chain: Methionine--tRNA ligase (681 aa).

Positions 12–22 (PYANGSIHLGH) match the 'HIGH' region motif. Zn(2+) contacts are provided by C143, C146, C156, and C159. The 'KMSKS' region motif lies at 327–331 (KMSKS). Position 330 (K330) interacts with ATP. The segment covering 545–557 (FEKSNPEKAKQDP) has biased composition (basic and acidic residues). Residues 545–566 (FEKSNPEKAKQDPSKSNTNEVK) are disordered. In terms of domain architecture, tRNA-binding spans 580 to 681 (ELSKVELRVG…RDASPGDLLK (102 aa)).

It belongs to the class-I aminoacyl-tRNA synthetase family. MetG type 1 subfamily. As to quaternary structure, homodimer. Zn(2+) serves as cofactor.

It is found in the cytoplasm. The enzyme catalyses tRNA(Met) + L-methionine + ATP = L-methionyl-tRNA(Met) + AMP + diphosphate. Is required not only for elongation of protein synthesis but also for the initiation of all mRNA translation through initiator tRNA(fMet) aminoacylation. In Leptospira biflexa serovar Patoc (strain Patoc 1 / ATCC 23582 / Paris), this protein is Methionine--tRNA ligase.